The primary structure comprises 514 residues: FAD-dependent monooxygenase AacuC (514 aa).

The interval 1–29 is disordered; that stretch reads MVSNEYLTHGDKDEFDPAKWSSTPGELPP. Basic and acidic residues predominate over residues 8–17; the sequence is THGDKDEFDP. Residues valine 79 and arginine 146 each coordinate FAD. Residue arginine 227 is part of the active site. The FAD site is built by aspartate 358 and glycine 371.

This sequence belongs to the paxM FAD-dependent monooxygenase family. It depends on FAD as a cofactor.

Its pathway is secondary metabolite biosynthesis. Its function is as follows. FAD-dependent monooxygenase; part of the gene cluster that mediates the biosynthesis of the tetrahydroxanthone dimer secalonic acid D. The pathway begins with the synthesis of atrochrysone thioester by the polyketide synthase AacuL. The atrochrysone carboxyl ACP thioesterase AacuM then breaks the thioester bond and releases the atrochrysone carboxylic acid from AacuL. Atrochrysone carboxylic acid is decarboxylated by the decarboxylase AacuI, and oxidized by the anthrone oxygenase AacuG to yield emodin. Emodin is then reduced to emodin hydroquinone by a yet unidentified oxidoreductase. A-ring reduction by the short chain dehydrogenase AacuN, dehydration by the scytalone dehydratase-like protein AacuK and probable spontaneous re-oxidation, results in overall deoxygenation to chrysophanol. Baeyer-Villiger oxidation by the Baeyer-Villiger monooxygenase (BVMO) AacuH then yields monodictyphenone. Monodictyphenone is transformed into compounds with the tetrahydroxanthone skeleton via methylesterification by the methyltransferase AacuQ, followed by the action of the flavin-dependent monooxygenase AacuC, the isomerase AacuP, and the short chain dehydrogenase/reductase AacuF or AacuD. AacuF and AacuD should accept the same compound as a substrate but perform the ketoreduction with a different stereoselectivity, thus yielding blennolides B and A, respectively. In the final step of the biosynthesis, the cytochrome P450 monooxygenase AacuE accepts blennolide B and/or blennolide A to conduct the dimerization reaction to furnish the tetrahydroxanthone dimers, secalonic acids D, B, and F. The chain is FAD-dependent monooxygenase AacuC from Aspergillus aculeatus (strain ATCC 16872 / CBS 172.66 / WB 5094).